The following is an 808-amino-acid chain: Phospholipase D alpha 1 (808 aa).

The 125-residue stretch at 1–125 folds into the C2 domain; sequence MAKTLLHGTL…LEGEEVDKWV (125 aa). Asp-186 contacts Ca(2+). The PLD phosphodiesterase 1 domain maps to 326 to 364; it reads TIFTHHQKIVVVDSEMPTSGSENRRVVSFVGGIDLCDGR. Catalysis depends on residues His-331, Lys-333, and Asp-338. His-331 is an a 1,2-diacyl-sn-glycero-3-phosphate binding site. Residues His-370 and His-404 each contribute to the Ca(2+) site. The PLD phosphodiesterase 2 domain maps to 654-681; that stretch reads FMIYVHAKMMIVDDEYIIIGSANINQRS. Active-site residues include His-659, Lys-661, and Asp-666. Position 659 (His-659) interacts with a 1,2-diacyl-sn-glycero-3-phosphate. A Ca(2+)-binding site is contributed by Glu-720.

It belongs to the phospholipase D family. C2-PLD subfamily. Requires Ca(2+) as cofactor.

It carries out the reaction a 1,2-diacyl-sn-glycero-3-phosphocholine + H2O = a 1,2-diacyl-sn-glycero-3-phosphate + choline + H(+). In terms of biological role, hydrolyzes glycerol-phospholipids at the terminal phosphodiesteric bond. Plays an important role in various cellular processes. This is Phospholipase D alpha 1 (PLD1) from Spuriopimpinella brachycarpa (Chamnamul).